We begin with the raw amino-acid sequence, 142 residues long: Struthiocalcin-2 (142 aa).

Disulfide bonds link Cys6–Cys17, Cys34–Cys138, and Cys113–Cys130. Residues 13–139 enclose the C-type lectin domain; the sequence is FDGRCYGFFP…CSDRKPFICE (127 aa). A phosphoserine mark is found at Ser62, Ser66, and Ser68.

The protein localises to the secreted. It is found in the extracellular space. The protein resides in the extracellular matrix. This is Struthiocalcin-2 from Struthio camelus (Common ostrich).